The sequence spans 378 residues: Flap endonuclease 1 (378 aa).

The tract at residues 1 to 102 (MGIHGLAKLI…GELAKRSERR (102 aa)) is N-domain. Position 19 is a symmetric dimethylarginine; by PRMT5 (Arg19). Asp34 contributes to the Mg(2+) binding site. DNA-binding residues include Arg47 and Arg69. Residue Lys78 is modified to N6-acetyllysine. Residue Asp84 coordinates Mg(2+). Arg98 and Arg102 each carry symmetric dimethylarginine; by PRMT5. The tract at residues 120-251 (EVEKFTKRLV…KRAVDLIQKH (132 aa)) is I-domain. Mg(2+)-binding residues include Glu156, Glu158, Asp177, and Asp179. Glu156 is a DNA binding site. The residue at position 185 (Ser185) is a Phosphoserine; by CDK2. Symmetric dimethylarginine; by PRMT5 is present on Arg190. Residue Ser195 is modified to Phosphoserine. Gly229 and Asp231 together coordinate DNA. Residue Asp231 participates in Mg(2+) binding. Phosphoserine is present on residues Ser253, Ser291, and Ser333. The segment at 325-378 (RLSKSRQGSTQGRLDDFFKVTGSLSSAKRKEPEPKGPAKKKAKTGGAGKFRRGK) is disordered. Residue Thr334 is modified to Phosphothreonine. Residues 334–342 (TQGRLDDFF) form an interaction with PCNA region. 3 positions are modified to N6-acetyllysine: Lys352, Lys373, and Lys378. Over residues 361 to 378 (PAKKKAKTGGAGKFRRGK) the composition is skewed to basic residues.

It belongs to the XPG/RAD2 endonuclease family. FEN1 subfamily. Interacts with PCNA. Three molecules of FEN1 bind to one PCNA trimer with each molecule binding to one PCNA monomer. PCNA stimulates the nuclease activity without altering cleavage specificity. The C-terminal domain binds EP300; can bind simultaneously to both PCNA and EP300. Interacts with DDX11; this interaction is direct and increases flap endonuclease activity of FEN1. Interacts with WDR4; regulating its endonuclease activity. Interacts with POLB. Mg(2+) serves as cofactor. Post-translationally, acetylated by EP300. Acetylation inhibits both endonuclease and exonuclease activity. Acetylation also reduces DNA-binding activity but does not affect interaction with PCNA or EP300. In terms of processing, phosphorylation upon DNA damage induces relocalization to the nuclear plasma. Phosphorylation at Ser-185 by CDK2 occurs during late S-phase and results in dissociation from PCNA. Methylation at Arg-190 by PRMT5 impedes Ser-185 phosphorylation and increases interaction with PCNA.

Its subcellular location is the nucleus. The protein resides in the nucleolus. It is found in the nucleoplasm. The protein localises to the mitochondrion. Structure-specific nuclease with 5'-flap endonuclease and 5'-3' exonuclease activities involved in DNA replication and repair. During DNA replication, cleaves the 5'-overhanging flap structure that is generated by displacement synthesis when DNA polymerase encounters the 5'-end of a downstream Okazaki fragment. It enters the flap from the 5'-end and then tracks to cleave the flap base, leaving a nick for ligation. Also involved in the long patch base excision repair (LP-BER) pathway, by cleaving within the apurinic/apyrimidinic (AP) site-terminated flap. Acts as a genome stabilization factor that prevents flaps from equilibrating into structures that lead to duplications and deletions. Also possesses 5'-3' exonuclease activity on nicked or gapped double-stranded DNA, and exhibits RNase H activity. Also involved in replication and repair of rDNA and in repairing mitochondrial DNA. The polypeptide is Flap endonuclease 1 (Mus musculus (Mouse)).